Here is a 1926-residue protein sequence, read N- to C-terminus: Myosin-15 (1926 aa).

A Myosin N-terminal SH3-like domain is found at Asp-29–Pro-79. The region spanning Glu-83 to Asp-770 is the Myosin motor domain. Lys-127 is modified (N6,N6,N6-trimethyllysine). Gly-176 to Thr-183 is a binding site for ATP. Actin-binding regions lie at residues Leu-647–Val-669 and Arg-749–Gly-763. Residues Leu-773–Ala-802 form the IQ domain. A coiled-coil region spans residues Lys-833–Glu-1926.

Belongs to the TRAFAC class myosin-kinesin ATPase superfamily. Myosin family. Muscle myosin is a hexameric protein that consists of 2 heavy chain subunits (MHC), 2 alkali light chain subunits (MLC) and 2 regulatory light chain subunits (MLC-2).

The protein localises to the cytoplasm. It is found in the myofibril. In terms of biological role, muscle contraction. This Homo sapiens (Human) protein is Myosin-15 (MYH15).